We begin with the raw amino-acid sequence, 335 residues long: E3 ubiquitin ligase rnf-121 (335 aa).

Over 1 to 47 (MGQHGAIRLQNEVQEGMPPPHELTEEEQWAEEHRKMHEKHKGHEAMH) the chain is Cytoplasmic. Residues 48-68 (MEMMVIFMISVIVGQIFLVTW) traverse the membrane as a helical segment. Residues 69-72 (KRKH) are Lumenal-facing. Residues 73–93 (FKSYQMCTLIGMLTIPVYVCF) traverse the membrane as a helical segment. The Cytoplasmic segment spans residues 94–99 (NRSWYR). A helical transmembrane segment spans residues 100 to 120 (FLATWLVFCIFSAFIWLKASA). Residues 121–143 (QHISGGTPRFVYKWFLFLHKLSY) are Lumenal-facing. A helical membrane pass occupies residues 144 to 164 (VLGVVGYLIMMGALLGFHVLF). Over 165–168 (GVSQ) the chain is Cytoplasmic. A helical membrane pass occupies residues 169–189 (PTLMDAGILFMFYGVYYGVLG). Topologically, residues 190 to 335 (RDFAHICTAR…QGLTTWMGLE (146 aa)) are lumenal. Residues 222–284 (CAVCGGRLDD…GKLQTCPYCK (63 aa)) form an RING-type; atypical zinc finger.

This sequence belongs to the RNF121 family. As to expression, expressed in body wall muscles, the hypodermis, seam cells, vulval cells, spermathecal cells, uterine cells and the distal tip cell (at protein level).

Its subcellular location is the endoplasmic reticulum membrane. It is found in the golgi apparatus membrane. The enzyme catalyses S-ubiquitinyl-[E2 ubiquitin-conjugating enzyme]-L-cysteine + [acceptor protein]-L-lysine = [E2 ubiquitin-conjugating enzyme]-L-cysteine + N(6)-ubiquitinyl-[acceptor protein]-L-lysine.. The protein operates within protein modification; protein ubiquitination. E3 ubiquitin ligase which accepts ubiquitin and transfers it to substrates such as the beta-integrin subunit pat-3, promoting their degradation by the endoplasmic reticulum-associated degradation (ERAD) pathway which is a pathway involved in ubiquitin-dependent degradation of misfolded endoplasmic reticulum proteins. Negatively regulates the unfolded protein response to reduce endoplasmic reticulum stress. Required for the cessation of distal tip cell migration at the end of larval morphogenesis. Plays a role in germline and gonad development. This Caenorhabditis elegans protein is E3 ubiquitin ligase rnf-121.